Reading from the N-terminus, the 429-residue chain is Ribosomal RNA small subunit methyltransferase B (429 aa).

Residues 254–260 (CAAPGGK), D277, D303, and D322 each bind S-adenosyl-L-methionine. C375 functions as the Nucleophile in the catalytic mechanism. The tract at residues 397–419 (ALSETGTPDQPGQQNLPGGEEGD) is disordered. A compositionally biased stretch (polar residues) spans 400-412 (ETGTPDQPGQQNL).

The protein belongs to the class I-like SAM-binding methyltransferase superfamily. RsmB/NOP family.

It localises to the cytoplasm. It carries out the reaction cytidine(967) in 16S rRNA + S-adenosyl-L-methionine = 5-methylcytidine(967) in 16S rRNA + S-adenosyl-L-homocysteine + H(+). Functionally, specifically methylates the cytosine at position 967 (m5C967) of 16S rRNA. This Salmonella heidelberg (strain SL476) protein is Ribosomal RNA small subunit methyltransferase B.